A 424-amino-acid polypeptide reads, in one-letter code: Imidazolonepropionase (424 aa).

Residues His84 and His86 each contribute to the Fe(3+) site. Zn(2+) contacts are provided by His84 and His86. 3 residues coordinate 4-imidazolone-5-propanoate: Arg93, Tyr156, and His189. An N-formimidoyl-L-glutamate-binding site is contributed by Tyr156. Fe(3+) is bound at residue His254. His254 is a Zn(2+) binding site. A 4-imidazolone-5-propanoate-binding site is contributed by Glu257. Asp328 contacts Fe(3+). Asp328 is a binding site for Zn(2+). Residues Asn330 and Gly332 each coordinate N-formimidoyl-L-glutamate. Ser333 is a binding site for 4-imidazolone-5-propanoate.

This sequence belongs to the metallo-dependent hydrolases superfamily. HutI family. It depends on Zn(2+) as a cofactor. The cofactor is Fe(3+).

Its subcellular location is the cytoplasm. The enzyme catalyses 4-imidazolone-5-propanoate + H2O = N-formimidoyl-L-glutamate. It participates in amino-acid degradation; L-histidine degradation into L-glutamate; N-formimidoyl-L-glutamate from L-histidine: step 3/3. Its function is as follows. Catalyzes the hydrolytic cleavage of the carbon-nitrogen bond in imidazolone-5-propanoate to yield N-formimidoyl-L-glutamate. It is the third step in the universal histidine degradation pathway. This chain is Imidazolonepropionase, found in Geobacillus kaustophilus (strain HTA426).